The sequence spans 137 residues: DNA polymerase III subunit psi (137 aa).

The protein belongs to the DNA polymerase III psi/HolD chain family. As to quaternary structure, the DNA polymerase III holoenzyme complex contains at least 10 different subunits organized into 3 functionally essential subassemblies: the Pol III core, the beta sliding clamp processivity factor and the clamp-loading complex. The Pol III core (subunits alpha, epsilon and theta) contains the polymerase and the 3'-5' exonuclease proofreading activities. The polymerase is tethered to the template via the dimeric beta sliding clamp processivity factor. The clamp-loading complex (also called gamma complex) assembles the beta sliding clamp onto the primed template and plays a central role in the organization and communication at the replication fork. The clamp-loading complex contains delta, delta', psi and chi, and 3 copies of either or both of two different DnaX proteins, gamma and tau. The DNA replisome complex has a single clamp loader (3 tau and 1 each of delta, delta', psi and chi subunits) which binds 3 Pol III cores (1 core on the leading strand and 2 on the lagging strand) each with a beta sliding clamp dimer. Additional proteins in the replisome are other copies of gamma, psi (this protein) and chi (holC), SSB, DNA helicase and RNA primase. The clamp loader hydrolyzes ATP to assemble the beta processivity factor onto the primed template and plays a central role in the organization and communication at the replication fork. Interacts directly with the chi subunit (holC).

It carries out the reaction DNA(n) + a 2'-deoxyribonucleoside 5'-triphosphate = DNA(n+1) + diphosphate. Part of the beta sliding clamp loading complex, which hydrolyzes ATP to load the beta clamp onto primed DNA to form the DNA replication pre-initiation complex. DNA polymerase III is a complex, multichain enzyme responsible for most of the replicative synthesis in bacteria. This DNA polymerase also exhibits 3' to 5' exonuclease activity. This chain is DNA polymerase III subunit psi, found in Escherichia coli (strain K12).